The sequence spans 58 residues: uncharacterized protein (58 aa).

This sequence to A.fulgidus AF2407.1.

This is an uncharacterized protein from Pyrococcus abyssi (strain GE5 / Orsay).